The chain runs to 122 residues: Large ribosomal subunit protein uL18 (122 aa).

Belongs to the universal ribosomal protein uL18 family. As to quaternary structure, part of the 50S ribosomal subunit; part of the 5S rRNA/L5/L18/L25 subcomplex. Contacts the 5S and 23S rRNAs.

This is one of the proteins that bind and probably mediate the attachment of the 5S RNA into the large ribosomal subunit, where it forms part of the central protuberance. The chain is Large ribosomal subunit protein uL18 from Acetivibrio thermocellus (strain ATCC 27405 / DSM 1237 / JCM 9322 / NBRC 103400 / NCIMB 10682 / NRRL B-4536 / VPI 7372) (Clostridium thermocellum).